The chain runs to 397 residues: Tryptophan synthase beta chain (397 aa).

Lysine 86 carries the post-translational modification N6-(pyridoxal phosphate)lysine.

This sequence belongs to the TrpB family. As to quaternary structure, tetramer of two alpha and two beta chains. It depends on pyridoxal 5'-phosphate as a cofactor.

The enzyme catalyses (1S,2R)-1-C-(indol-3-yl)glycerol 3-phosphate + L-serine = D-glyceraldehyde 3-phosphate + L-tryptophan + H2O. It participates in amino-acid biosynthesis; L-tryptophan biosynthesis; L-tryptophan from chorismate: step 5/5. In terms of biological role, the beta subunit is responsible for the synthesis of L-tryptophan from indole and L-serine. The protein is Tryptophan synthase beta chain (trpB) of Buchnera aphidicola subsp. Diuraphis noxia.